The sequence spans 64 residues: Large ribosomal subunit protein bL33 (64 aa).

Residues 16–25 show a composition bias toward basic and acidic residues; it reads EARTSSEPRR. Residues 16–41 form a disordered region; that stretch reads EARTSSEPRRSNGVSRYTTEKNKRNT.

This sequence belongs to the bacterial ribosomal protein bL33 family.

This Prochlorococcus marinus subsp. pastoris (strain CCMP1986 / NIES-2087 / MED4) protein is Large ribosomal subunit protein bL33.